Reading from the N-terminus, the 351-residue chain is Phosphate acyltransferase (351 aa).

This sequence belongs to the PlsX family. Homodimer. Probably interacts with PlsY.

It is found in the cytoplasm. It carries out the reaction a fatty acyl-[ACP] + phosphate = an acyl phosphate + holo-[ACP]. Its pathway is lipid metabolism; phospholipid metabolism. Its function is as follows. Catalyzes the reversible formation of acyl-phosphate (acyl-PO(4)) from acyl-[acyl-carrier-protein] (acyl-ACP). This enzyme utilizes acyl-ACP as fatty acyl donor, but not acyl-CoA. The sequence is that of Phosphate acyltransferase from Neisseria meningitidis serogroup A / serotype 4A (strain DSM 15465 / Z2491).